The following is a 958-amino-acid chain: Coiled-coil domain-containing protein 33 (958 aa).

One can recognise a C2 domain in the interval 214 to 353; that stretch reads SPEEPLIASQ…LVKPTESGKA (140 aa). Over residues 602–617 the composition is skewed to polar residues; it reads SKDTVSSTMDLSTSTP. The tract at residues 602 to 628 is disordered; sequence SKDTVSSTMDLSTSTPREAEEEPLVPE. 2 coiled-coil regions span residues 632–774 and 859–899; these read DTEM…LEDR and FNLL…RLQE. The tract at residues 899–958 is disordered; sequence EQEKGFRHPSNSIIIEQPSALTHSMDLKQPSELEPLLPSSDSKLNKPLSPQKETANSQQT. Polar residues-rich tracts occupy residues 907–920 and 949–958; these read PSNSIIIEQPSALT and QKETANSQQT.

The polypeptide is Coiled-coil domain-containing protein 33 (CCDC33) (Homo sapiens (Human)).